Here is a 76-residue protein sequence, read N- to C-terminus: MARFFRRRKFCRFTAEDVKEIDFKDLNTLKAYVSETGKIVPSRITGTKARYQRQLATAIKRARFLALLPYTDSHGR.

It belongs to the bacterial ribosomal protein bS18 family. Part of the 30S ribosomal subunit. Forms a tight heterodimer with protein bS6.

In terms of biological role, binds as a heterodimer with protein bS6 to the central domain of the 16S rRNA, where it helps stabilize the platform of the 30S subunit. This is Small ribosomal subunit protein bS18 from Pseudomonas entomophila (strain L48).